A 201-amino-acid polypeptide reads, in one-letter code: Small ribosomal subunit protein uS4c (201 aa).

The segment at 17 to 36 (ALPGLTRKTPKSGSNLKKKF) is disordered. The region spanning 89 to 157 (MRLDNILFRL…VQNYIASSDP (69 aa)) is the S4 RNA-binding domain.

The protein belongs to the universal ribosomal protein uS4 family. In terms of assembly, part of the 30S ribosomal subunit. Contacts protein S5. The interaction surface between S4 and S5 is involved in control of translational fidelity.

Its subcellular location is the plastid. It is found in the chloroplast. In terms of biological role, one of the primary rRNA binding proteins, it binds directly to 16S rRNA where it nucleates assembly of the body of the 30S subunit. Its function is as follows. With S5 and S12 plays an important role in translational accuracy. The chain is Small ribosomal subunit protein uS4c (rps4) from Agrostis stolonifera (Creeping bentgrass).